Reading from the N-terminus, the 569-residue chain is Protein ste7 (569 aa).

2 disordered regions span residues 195–219 (APIT…VNSV) and 255–274 (FSVS…SPPI). A compositionally biased stretch (low complexity) spans 198 to 219 (TTSSATHTSQFSTSSSSSVNSV). Residues 264 to 274 (PQTPISMSPPI) show a composition bias toward pro residues.

Belongs to the arrestin family.

Functionally, has a role in promoting meiosis whereby it is involved in establishing the mating pheromone signaling pathway. It also has a role in suppressing meiosis until the conjugation process is complete. This chain is Protein ste7 (ste7), found in Schizosaccharomyces pombe (strain 972 / ATCC 24843) (Fission yeast).